The sequence spans 75 residues: uncharacterized protein (75 aa).

The protein localises to the plastid. The protein resides in the chloroplast. This is an uncharacterized protein from Calycanthus floridus var. glaucus (Eastern sweetshrub).